Reading from the N-terminus, the 318-residue chain is Galactose-1-phosphate uridylyltransferase (318 aa).

Positions 32, 35, and 90 each coordinate Zn(2+). Asparagine 130 provides a ligand contact to UDP-alpha-D-glucose. Histidine 141 is a binding site for Zn(2+). Histidine 143 functions as the Tele-UMP-histidine intermediate in the catalytic mechanism. Glutamine 145 provides a ligand contact to UDP-alpha-D-glucose.

The protein belongs to the galactose-1-phosphate uridylyltransferase type 1 family. The cofactor is Zn(2+).

It catalyses the reaction alpha-D-galactose 1-phosphate + UDP-alpha-D-glucose = alpha-D-glucose 1-phosphate + UDP-alpha-D-galactose. It participates in carbohydrate metabolism; galactose metabolism. In Thermotoga maritima (strain ATCC 43589 / DSM 3109 / JCM 10099 / NBRC 100826 / MSB8), this protein is Galactose-1-phosphate uridylyltransferase (galT).